The sequence spans 239 residues: Large ribosomal subunit protein uL2 (239 aa).

Residues 202 to 239 are disordered; it reads HGGGSHQHVGRPSTVARNTPPGRKVGHIAARRTGRRKG. Basic residues predominate over residues 225-239; the sequence is KVGHIAARRTGRRKG.

This sequence belongs to the universal ribosomal protein uL2 family. As to quaternary structure, part of the 50S ribosomal subunit. Forms a bridge to the 30S subunit in the 70S ribosome.

One of the primary rRNA binding proteins. Required for association of the 30S and 50S subunits to form the 70S ribosome, for tRNA binding and peptide bond formation. It has been suggested to have peptidyltransferase activity; this is somewhat controversial. Makes several contacts with the 16S rRNA in the 70S ribosome. This chain is Large ribosomal subunit protein uL2, found in Desulfurococcus amylolyticus (strain DSM 18924 / JCM 16383 / VKM B-2413 / 1221n) (Desulfurococcus kamchatkensis).